Reading from the N-terminus, the 426-residue chain is Probable inactive metalloprotease YmfF (426 aa).

Histidine 50 and glutamate 138 together coordinate Zn(2+).

This sequence belongs to the peptidase M16 family.

The protein is Probable inactive metalloprotease YmfF (ymfF) of Bacillus subtilis (strain 168).